Here is a 201-residue protein sequence, read N- to C-terminus: Holliday junction branch migration complex subunit RuvA (201 aa).

The segment at methionine 1–isoleucine 63 is domain I. The tract at residues aspartate 64–serine 142 is domain II. The flexible linker stretch occupies residues threonine 143–serine 152. Residues serine 152–lysine 201 form a domain III region.

The protein belongs to the RuvA family. In terms of assembly, homotetramer. Forms an RuvA(8)-RuvB(12)-Holliday junction (HJ) complex. HJ DNA is sandwiched between 2 RuvA tetramers; dsDNA enters through RuvA and exits via RuvB. An RuvB hexamer assembles on each DNA strand where it exits the tetramer. Each RuvB hexamer is contacted by two RuvA subunits (via domain III) on 2 adjacent RuvB subunits; this complex drives branch migration. In the full resolvosome a probable DNA-RuvA(4)-RuvB(12)-RuvC(2) complex forms which resolves the HJ.

It localises to the cytoplasm. Functionally, the RuvA-RuvB-RuvC complex processes Holliday junction (HJ) DNA during genetic recombination and DNA repair, while the RuvA-RuvB complex plays an important role in the rescue of blocked DNA replication forks via replication fork reversal (RFR). RuvA specifically binds to HJ cruciform DNA, conferring on it an open structure. The RuvB hexamer acts as an ATP-dependent pump, pulling dsDNA into and through the RuvAB complex. HJ branch migration allows RuvC to scan DNA until it finds its consensus sequence, where it cleaves and resolves the cruciform DNA. In Acinetobacter baylyi (strain ATCC 33305 / BD413 / ADP1), this protein is Holliday junction branch migration complex subunit RuvA.